The primary structure comprises 159 residues: Cyclic pyranopterin monophosphate synthase (159 aa).

Substrate-binding positions include 75 to 77 (LCH) and 113 to 114 (ME). The active site involves aspartate 128.

The protein belongs to the MoaC family. In terms of assembly, homohexamer; trimer of dimers.

It carries out the reaction (8S)-3',8-cyclo-7,8-dihydroguanosine 5'-triphosphate = cyclic pyranopterin phosphate + diphosphate. Its pathway is cofactor biosynthesis; molybdopterin biosynthesis. Catalyzes the conversion of (8S)-3',8-cyclo-7,8-dihydroguanosine 5'-triphosphate to cyclic pyranopterin monophosphate (cPMP). This Heliobacterium modesticaldum (strain ATCC 51547 / Ice1) protein is Cyclic pyranopterin monophosphate synthase.